Consider the following 424-residue polypeptide: MTGMKKGKNKKKNVKNDERYKELDSLISNDSEIGNNSRWGGAKRICKLIGNEMRNNIYVYLLSILYLCVSVMNKVFSKRTLNKIGNYSFVTSEVHNMICTIVFQLLYFIYRKTSNPASRNESQKNFGWQFFLISLLDASTVIITMIGLTRTTGNIQSFIMQLIIPVNMYFCFIFLGYRYHLFNYLGAFIILITIAAVETVLSYETQSDNSIIFNLIMIFALIPLSFSNMTREVVFKKHKINIIRLNAMVALFQFFTSLLVLPVYNISFLKEIYMPFSEMGTNINDGLRCLFYGQSTIVENCGVGMVKMCDQCEGAWKTFITYSFFNICDNLLVCYIIDKFSTMTYTIVSCIQGPAITIAYYFKFLAGDVVRQPRLLDFLTLFGYLLGTIIYRIGNIILEKKKMLKALNTDGSEAELTSIETSTA.

Over 1-56 the chain is Cytoplasmic; that stretch reads MTGMKKGKNKKKNVKNDERYKELDSLISNDSEIGNNSRWGGAKRICKLIGNEMRNN. The chain crosses the membrane as a helical span at residues 57-77; that stretch reads IYVYLLSILYLCVSVMNKVFS. Over 78–88 the chain is Vacuolar; the sequence is KRTLNKIGNYS. The N-linked (GlcNAc...) asparagine glycan is linked to Asn-86. A helical membrane pass occupies residues 89–109; sequence FVTSEVHNMICTIVFQLLYFI. The Cytoplasmic portion of the chain corresponds to 110-125; the sequence is YRKTSNPASRNESQKN. The chain crosses the membrane as a helical span at residues 126–146; it reads FGWQFFLISLLDASTVIITMI. The Vacuolar segment spans residues 147 to 156; sequence GLTRTTGNIQ. A helical membrane pass occupies residues 157-177; it reads SFIMQLIIPVNMYFCFIFLGY. Over 178 to 180 the chain is Cytoplasmic; the sequence is RYH. A helical membrane pass occupies residues 181–201; the sequence is LFNYLGAFIILITIAAVETVL. Topologically, residues 202 to 209 are vacuolar; it reads SYETQSDN. The helical transmembrane segment at 210 to 230 threads the bilayer; sequence SIIFNLIMIFALIPLSFSNMT. Residues 231 to 248 are Cytoplasmic-facing; it reads REVVFKKHKINIIRLNAM. A helical membrane pass occupies residues 249–269; it reads VALFQFFTSLLVLPVYNISFL. Over 270 to 317 the chain is Vacuolar; sequence KEIYMPFSEMGTNINDGLRCLFYGQSTIVENCGVGMVKMCDQCEGAWK. 2 disulfide bridges follow: Cys-289–Cys-312 and Cys-301–Cys-309. The chain crosses the membrane as a helical span at residues 318–338; it reads TFITYSFFNICDNLLVCYIID. Residues 339-346 are Cytoplasmic-facing; it reads KFSTMTYT. A helical membrane pass occupies residues 347–367; the sequence is IVSCIQGPAITIAYYFKFLAG. Residues 368-377 are Vacuolar-facing; that stretch reads DVVRQPRLLD. Residues 378-398 form a helical membrane-spanning segment; that stretch reads FLTLFGYLLGTIIYRIGNIIL. At 399–424 the chain is on the cytoplasmic side; that stretch reads EKKKMLKALNTDGSEAELTSIETSTA.

The protein belongs to the CRT-like transporter family.

The protein localises to the vacuole membrane. Functionally, nutrient transporter. Involved in maintaining the osmotic homeostasis of the digestive vacuole. The protein is Putative chloroquine resistance transporter of Plasmodium chabaudi.